The primary structure comprises 358 residues: Acetylxylan esterase / glucomannan deacetylase (358 aa).

An N-terminal signal peptide occupies residues 1-18 (MKLLFPILLLTGSYFLSA). Residue Cys-19 is the site of N-palmitoyl cysteine attachment. Cys-19 carries the S-diacylglycerol cysteine lipid modification. Catalysis depends on Ser-160, which acts as the Nucleophile. Catalysis depends on charge relay system residues Asp-333 and His-335.

Belongs to the carbohydrate esterase 2 (CE2) family.

It localises to the cell membrane. It carries out the reaction Deacetylation of xylans and xylo-oligosaccharides.. It functions in the pathway glycan degradation; xylan degradation. In terms of biological role, involved in the degradation of plant cell wall polysaccharides. Catalyzes the deacetylation of acetylated birchwood xylan and glucomannan, with equal efficiency, and of the synthetic substrate 4-nitrophenyl acetate (4-NPAc). Does not bind cellulose, cellohexaose and beta-glucan. The protein is Acetylxylan esterase / glucomannan deacetylase of Cellvibrio japonicus (strain Ueda107) (Pseudomonas fluorescens subsp. cellulosa).